The sequence spans 388 residues: MIKNPKVLILTAHYGNGHVQVAKTLEQTFRQKGIKDVIVCDLFGESHPVITDITKYLYLKSYTIGKELYRLFYYGVEKIYDKKIASWYANFGRKRLKLLLQAEKPDIVINTFPIIAVPELKKQTGISIPVYNVLTDFCVHKIWIHREVDRYFVATDHVKKVMVDIGVPAEQIVETGIPIRSSFELKINPDIIYNKYQLCKNKKILLIVAGAHGVLGSVKELCQSFMSVPDLQVVVVCGKNEALKQDLVGVQETNPDALKVFGYVENIDELFRVTSCMITKPGGITLSEAAALQVPVILYKPVPGQENENAMYFERKGAAVVIRDDSEVFAKTEALLKDDMKLLQMKEAMKSIYRPEPADHIVDTILAENHVEPNHIPIKSPALAQSFT.

Belongs to the glycosyltransferase 28 family. UgtP subfamily.

The protein resides in the cell membrane. It carries out the reaction a 1,2-diacyl-3-O-(beta-D-glucopyranosyl)-sn-glycerol + UDP-alpha-D-glucose = a 1,2-diacyl-3-O-(beta-D-Glc-(1-&gt;6)-beta-D-Glc)-sn-glycerol + UDP + H(+). The catalysed reaction is a 1,2-diacyl-3-O-(beta-D-Glc-(1-&gt;6)-beta-D-Glc)-sn-glycerol + UDP-alpha-D-glucose = a 1,2-diacyl-3-O-(beta-D-Glc-(1-&gt;6)-beta-D-Glc-(1-&gt;6)-beta-D-Glc)-sn-glycerol + UDP + H(+). The enzyme catalyses a 1,2-diacyl-sn-glycerol + UDP-alpha-D-glucose = a 1,2-diacyl-3-O-(beta-D-glucopyranosyl)-sn-glycerol + UDP + H(+). The protein operates within glycolipid metabolism; diglucosyl-diacylglycerol biosynthesis. Functionally, processive glucosyltransferase involved in the biosynthesis of both the bilayer- and non-bilayer-forming membrane glucolipids. Is able to successively transfer up to three glucosyl residues to diacylglycerol (DAG), thereby catalyzing the formation of beta-monoglucosyl-DAG (3-O-(beta-D-glucopyranosyl)-1,2-diacyl-sn-glycerol), beta-diglucosyl-DAG (3-O-(beta-D-glucopyranosyl-beta-(1-&gt;6)-D-glucopyranosyl)-1,2-diacyl-sn-glycerol) and beta-triglucosyl-DAG (3-O-(beta-D-glucopyranosyl-beta-(1-&gt;6)-D-glucopyranosyl-beta-(1-&gt;6)-D-glucopyranosyl)-1,2-diacyl-sn-glycerol). Beta-diglucosyl-DAG is the predominant glycolipid found in Bacillales and is also used as a membrane anchor for lipoteichoic acid (LTA). The polypeptide is Processive diacylglycerol beta-glucosyltransferase (Bacillus cereus (strain ZK / E33L)).